A 177-amino-acid chain; its full sequence is HVA22-like protein a (177 aa).

The next 3 membrane-spanning stretches (helical) occupy residues 18 to 38 (VLAGPVVSLVYPLYASVQAIE), 47 to 67 (QWLTYWVLYSLLTLIELTFAK), and 68 to 88 (LIEWLPIWSYMKLILTCWLVI).

Belongs to the DP1 family. As to expression, predominantly expressed in flower buds and stem.

The protein localises to the membrane. The sequence is that of HVA22-like protein a (HVA22A) from Arabidopsis thaliana (Mouse-ear cress).